The chain runs to 106 residues: Gas vesicle protein J (106 aa).

The protein belongs to the gas vesicle GvpA family.

The protein resides in the gas vesicle. Functionally, a minor component of the gas vesicle, might be involved in nucleating gas vesicle formation. Gas vesicles are hollow, gas filled proteinaceous nanostructures found in some microorganisms. It is not clear what function gas vesicles perform in soil bacteria. This Streptomyces sp. (strain CB03234) protein is Gas vesicle protein J.